A 402-amino-acid chain; its full sequence is 4-hydroxy-3-methylbut-2-enyl diphosphate reductase (402 aa).

Position 66 (cysteine 66) interacts with [4Fe-4S] cluster. Histidine 96 provides a ligand contact to (2E)-4-hydroxy-3-methylbut-2-enyl diphosphate. Histidine 96 is a binding site for dimethylallyl diphosphate. Histidine 96 serves as a coordination point for isopentenyl diphosphate. Cysteine 157 is a binding site for [4Fe-4S] cluster. (2E)-4-hydroxy-3-methylbut-2-enyl diphosphate is bound at residue histidine 185. Histidine 185 is a binding site for dimethylallyl diphosphate. Histidine 185 provides a ligand contact to isopentenyl diphosphate. Glutamate 187 (proton donor) is an active-site residue. Threonine 250 provides a ligand contact to (2E)-4-hydroxy-3-methylbut-2-enyl diphosphate. Cysteine 288 is a [4Fe-4S] cluster binding site. Serine 317, serine 318, asparagine 319, and serine 379 together coordinate (2E)-4-hydroxy-3-methylbut-2-enyl diphosphate. Residues serine 317, serine 318, asparagine 319, and serine 379 each coordinate dimethylallyl diphosphate. The isopentenyl diphosphate site is built by serine 317, serine 318, asparagine 319, and serine 379.

It belongs to the IspH family. Requires [4Fe-4S] cluster as cofactor.

The catalysed reaction is isopentenyl diphosphate + 2 oxidized [2Fe-2S]-[ferredoxin] + H2O = (2E)-4-hydroxy-3-methylbut-2-enyl diphosphate + 2 reduced [2Fe-2S]-[ferredoxin] + 2 H(+). It carries out the reaction dimethylallyl diphosphate + 2 oxidized [2Fe-2S]-[ferredoxin] + H2O = (2E)-4-hydroxy-3-methylbut-2-enyl diphosphate + 2 reduced [2Fe-2S]-[ferredoxin] + 2 H(+). The protein operates within isoprenoid biosynthesis; dimethylallyl diphosphate biosynthesis; dimethylallyl diphosphate from (2E)-4-hydroxy-3-methylbutenyl diphosphate: step 1/1. It participates in isoprenoid biosynthesis; isopentenyl diphosphate biosynthesis via DXP pathway; isopentenyl diphosphate from 1-deoxy-D-xylulose 5-phosphate: step 6/6. In terms of biological role, catalyzes the conversion of 1-hydroxy-2-methyl-2-(E)-butenyl 4-diphosphate (HMBPP) into a mixture of isopentenyl diphosphate (IPP) and dimethylallyl diphosphate (DMAPP). Acts in the terminal step of the DOXP/MEP pathway for isoprenoid precursor biosynthesis. This is 4-hydroxy-3-methylbut-2-enyl diphosphate reductase from Thermosynechococcus vestitus (strain NIES-2133 / IAM M-273 / BP-1).